Reading from the N-terminus, the 267-residue chain is Diphthine--ammonia ligase (267 aa).

Tyrosine 97 is subject to Phosphotyrosine.

This sequence belongs to the Diphthine--ammonia ligase family.

It catalyses the reaction diphthine-[translation elongation factor 2] + NH4(+) + ATP = diphthamide-[translation elongation factor 2] + AMP + diphosphate + H(+). It participates in protein modification; peptidyl-diphthamide biosynthesis. Amidase that catalyzes the last step of diphthamide biosynthesis using ammonium and ATP. Diphthamide biosynthesis consists in the conversion of an L-histidine residue in the translation elongation factor 2 (EEF2) to diphthamide. The sequence is that of Diphthine--ammonia ligase (Dph6) from Mus musculus (Mouse).